A 154-amino-acid polypeptide reads, in one-letter code: Ribosomal RNA large subunit methyltransferase H (154 aa).

S-adenosyl-L-methionine-binding positions include G103 and 122–127; that span reads FSKLTF.

The protein belongs to the RNA methyltransferase RlmH family. Homodimer.

The protein resides in the cytoplasm. The catalysed reaction is pseudouridine(1915) in 23S rRNA + S-adenosyl-L-methionine = N(3)-methylpseudouridine(1915) in 23S rRNA + S-adenosyl-L-homocysteine + H(+). Its function is as follows. Specifically methylates the pseudouridine at position 1915 (m3Psi1915) in 23S rRNA. In Caldicellulosiruptor bescii (strain ATCC BAA-1888 / DSM 6725 / KCTC 15123 / Z-1320) (Anaerocellum thermophilum), this protein is Ribosomal RNA large subunit methyltransferase H.